Here is a 366-residue protein sequence, read N- to C-terminus: UDP-N-acetylenolpyruvoylglucosamine reductase (366 aa).

Positions 29–203 (VGPVARTLVT…LEVEFALDAS (175 aa)) constitute an FAD-binding PCMH-type domain. Arg-177 is an active-site residue. The active-site Proton donor is the Ser-258. Glu-358 is an active-site residue.

It belongs to the MurB family. FAD is required as a cofactor.

Its subcellular location is the cytoplasm. The catalysed reaction is UDP-N-acetyl-alpha-D-muramate + NADP(+) = UDP-N-acetyl-3-O-(1-carboxyvinyl)-alpha-D-glucosamine + NADPH + H(+). Its pathway is cell wall biogenesis; peptidoglycan biosynthesis. Cell wall formation. The polypeptide is UDP-N-acetylenolpyruvoylglucosamine reductase (Mycobacterium ulcerans (strain Agy99)).